The chain runs to 337 residues: N-acetyl-gamma-glutamyl-phosphate reductase (337 aa).

The active site involves cysteine 149.

Belongs to the NAGSA dehydrogenase family. Type 1 subfamily.

It localises to the cytoplasm. The enzyme catalyses N-acetyl-L-glutamate 5-semialdehyde + phosphate + NADP(+) = N-acetyl-L-glutamyl 5-phosphate + NADPH + H(+). Its pathway is amino-acid biosynthesis; L-arginine biosynthesis; N(2)-acetyl-L-ornithine from L-glutamate: step 3/4. Catalyzes the NADPH-dependent reduction of N-acetyl-5-glutamyl phosphate to yield N-acetyl-L-glutamate 5-semialdehyde. This is N-acetyl-gamma-glutamyl-phosphate reductase from Wolinella succinogenes (strain ATCC 29543 / DSM 1740 / CCUG 13145 / JCM 31913 / LMG 7466 / NCTC 11488 / FDC 602W) (Vibrio succinogenes).